Reading from the N-terminus, the 200-residue chain is Beta-1,6-glucan synthesis-associated protein KEG1 (200 aa).

Over 1 to 15 (MAGIKLTHKLYQYYQ) the chain is Lumenal. Residues 16–36 (LATSFLYAALLIRWLILMPLV) traverse the membrane as a helical segment. The Cytoplasmic segment spans residues 37-44 (GSRFLPGG). Residues 45 to 65 (IHEFLIYLMFYSSIMEVIWLL) traverse the membrane as a helical segment. The Lumenal segment spans residues 66-82 (RFHGFKYGLLSRTFLKD). A helical transmembrane segment spans residues 83 to 103 (LNFIYLVSVIHFYDDYEHALI). Residues 104-145 (LKNASYSSFIISLSLSQAYCHWCKLFKRKGVKERTLVWKVNT) lie on the Cytoplasmic side of the membrane. A helical transmembrane segment spans residues 146 to 166 (FVTLPILYLSEFALLLLNIQV). Residues 167-173 (KNYHSTP) lie on the Lumenal side of the membrane. Residues 174–194 (TLDIINRVVLLAYFPVLLTAY) form a helical membrane-spanning segment. At 195–200 (KKLLTK) the chain is on the cytoplasmic side.

In terms of assembly, interacts with KRE6.

The protein resides in the endoplasmic reticulum membrane. Involved in the biosynthesis of (1-&gt;6)-beta-D-glucan polymers of the cell wall. Required for viability. Involved in maintaining chromosome stability. This Saccharomyces cerevisiae (strain ATCC 204508 / S288c) (Baker's yeast) protein is Beta-1,6-glucan synthesis-associated protein KEG1 (KEG1).